Consider the following 73-residue polypeptide: uncharacterized protein (73 aa).

2 helical membrane passes run Leu-7–Leu-27 and Tyr-47–Leu-67.

The protein resides in the cell membrane. This is an uncharacterized protein from Methanocaldococcus jannaschii (strain ATCC 43067 / DSM 2661 / JAL-1 / JCM 10045 / NBRC 100440) (Methanococcus jannaschii).